An 809-amino-acid polypeptide reads, in one-letter code: Lon protease (809 aa).

The Lon N-terminal domain maps to 20 to 216 (LPLLALRDVV…ELMNYLMNQS (197 aa)). 369-376 (GPPGVGKT) lines the ATP pocket. The Lon proteolytic domain occupies 606–787 (EAQVGRVNGL…DEILPLALTS (182 aa)). Catalysis depends on residues S693 and K736.

It belongs to the peptidase S16 family. Homohexamer. Organized in a ring with a central cavity.

The protein resides in the cytoplasm. It catalyses the reaction Hydrolysis of proteins in presence of ATP.. ATP-dependent serine protease that mediates the selective degradation of mutant and abnormal proteins as well as certain short-lived regulatory proteins. Required for cellular homeostasis and for survival from DNA damage and developmental changes induced by stress. Degrades polypeptides processively to yield small peptide fragments that are 5 to 10 amino acids long. Binds to DNA in a double-stranded, site-specific manner. In Acinetobacter baumannii (strain AB307-0294), this protein is Lon protease.